The chain runs to 498 residues: 3-octaprenyl-4-hydroxybenzoate carboxy-lyase (498 aa).

Asn-176 serves as a coordination point for Mn(2+). Residues 179–181 (IYR), 193–195 (RWL), and 198–199 (RG) contribute to the prenylated FMN site. Glu-242 is a Mn(2+) binding site. The active-site Proton donor is the Asp-291.

Belongs to the UbiD family. As to quaternary structure, homohexamer. Prenylated FMN serves as cofactor. Requires Mn(2+) as cofactor.

It localises to the cell membrane. It catalyses the reaction a 4-hydroxy-3-(all-trans-polyprenyl)benzoate + H(+) = a 2-(all-trans-polyprenyl)phenol + CO2. It functions in the pathway cofactor biosynthesis; ubiquinone biosynthesis. Functionally, catalyzes the decarboxylation of 3-octaprenyl-4-hydroxy benzoate to 2-octaprenylphenol, an intermediate step in ubiquinone biosynthesis. In Escherichia coli O6:K15:H31 (strain 536 / UPEC), this protein is 3-octaprenyl-4-hydroxybenzoate carboxy-lyase.